A 166-amino-acid chain; its full sequence is Large ribosomal subunit protein uL10 (166 aa).

Belongs to the universal ribosomal protein uL10 family. As to quaternary structure, part of the ribosomal stalk of the 50S ribosomal subunit. The N-terminus interacts with L11 and the large rRNA to form the base of the stalk. The C-terminus forms an elongated spine to which L12 dimers bind in a sequential fashion forming a multimeric L10(L12)X complex.

Forms part of the ribosomal stalk, playing a central role in the interaction of the ribosome with GTP-bound translation factors. This is Large ribosomal subunit protein uL10 from Listeria monocytogenes serotype 4b (strain CLIP80459).